Here is a 68-residue protein sequence, read N- to C-terminus: DNA-directed RNA polymerase subunit omega (68 aa).

The protein belongs to the RNA polymerase subunit omega family. The RNAP catalytic core consists of 2 alpha, 1 beta, 1 beta' and 1 omega subunit. When a sigma factor is associated with the core the holoenzyme is formed, which can initiate transcription.

The enzyme catalyses RNA(n) + a ribonucleoside 5'-triphosphate = RNA(n+1) + diphosphate. Its function is as follows. Promotes RNA polymerase assembly. Latches the N- and C-terminal regions of the beta' subunit thereby facilitating its interaction with the beta and alpha subunits. This is DNA-directed RNA polymerase subunit omega from Sulfurovum sp. (strain NBC37-1).